A 153-amino-acid chain; its full sequence is uncharacterized protein (153 aa).

This is an uncharacterized protein from Saccharomyces cerevisiae (strain ATCC 204508 / S288c) (Baker's yeast).